The primary structure comprises 598 residues: Proline--tRNA ligase (598 aa).

It belongs to the class-II aminoacyl-tRNA synthetase family. ProS type 1 subfamily. In terms of assembly, homodimer.

Its subcellular location is the cytoplasm. It carries out the reaction tRNA(Pro) + L-proline + ATP = L-prolyl-tRNA(Pro) + AMP + diphosphate. In terms of biological role, catalyzes the attachment of proline to tRNA(Pro) in a two-step reaction: proline is first activated by ATP to form Pro-AMP and then transferred to the acceptor end of tRNA(Pro). As ProRS can inadvertently accommodate and process non-cognate amino acids such as alanine and cysteine, to avoid such errors it has two additional distinct editing activities against alanine. One activity is designated as 'pretransfer' editing and involves the tRNA(Pro)-independent hydrolysis of activated Ala-AMP. The other activity is designated 'posttransfer' editing and involves deacylation of mischarged Ala-tRNA(Pro). The misacylated Cys-tRNA(Pro) is not edited by ProRS. The sequence is that of Proline--tRNA ligase from Rippkaea orientalis (strain PCC 8801 / RF-1) (Cyanothece sp. (strain PCC 8801)).